The chain runs to 104 residues: Vesicle-associated membrane protein 3 (104 aa).

The segment at 1–23 (MTTNAPAGSSAAAGSSRRLQQTQ) is disordered. At 1–81 (MTTNAPAGSS…KRKYWWKNCK (81 aa)) the chain is on the cytoplasmic side. The span at 7 to 16 (AGSSAAAGSS) shows a compositional bias: low complexity. The 61-residue stretch at 18 to 78 (RLQQTQNQVD…AKLKRKYWWK (61 aa)) folds into the v-SNARE coiled-coil homology domain. Glycyl lysine isopeptide (Lys-Gly) (interchain with G-Cter in ubiquitin) cross-links involve residues K70, K72, and K81. A helical; Anchor for type IV membrane protein transmembrane segment spans residues 82–102 (MWAIGITVVVIIIIIIVVWSI). Topologically, residues 103-104 (SS) are vesicular.

Belongs to the synaptobrevin family. Interacts with POPDC1 (via the C-terminus cytoplasmic tail). Interacts with BCAP31; involved in VAMP3 export from the endoplasmic reticulum. Interacts with BAIAP3; this interaction is increased in the presence of calcium. Interacts with PICALM. Post-translationally, ubiquitinated by RNF167 at Lys-70, Lys-72 and Lys-81, regulating the recycling endosome pathway.

The protein localises to the early endosome membrane. The protein resides in the recycling endosome membrane. It localises to the synapse. It is found in the synaptosome. Its function is as follows. SNARE involved in vesicular transport from the late endosomes to the trans-Golgi network. This is Vesicle-associated membrane protein 3 (VAMP3) from Bos taurus (Bovine).